A 373-amino-acid chain; its full sequence is Queuine tRNA-ribosyltransferase (373 aa).

Asp-89 functions as the Proton acceptor in the catalytic mechanism. Substrate contacts are provided by residues 89–93 (DSGGF), Asp-143, Gln-187, and Gly-214. The interval 245–251 (GVGKPED) is RNA binding. Catalysis depends on Asp-264, which acts as the Nucleophile. Residues 269–273 (TRNAR) are RNA binding; important for wobble base 34 recognition. The Zn(2+) site is built by Cys-302, Cys-304, Cys-307, and His-333.

It belongs to the queuine tRNA-ribosyltransferase family. Homodimer. Within each dimer, one monomer is responsible for RNA recognition and catalysis, while the other monomer binds to the replacement base PreQ1. Requires Zn(2+) as cofactor.

The catalysed reaction is 7-aminomethyl-7-carbaguanine + guanosine(34) in tRNA = 7-aminomethyl-7-carbaguanosine(34) in tRNA + guanine. Its pathway is tRNA modification; tRNA-queuosine biosynthesis. Functionally, catalyzes the base-exchange of a guanine (G) residue with the queuine precursor 7-aminomethyl-7-deazaguanine (PreQ1) at position 34 (anticodon wobble position) in tRNAs with GU(N) anticodons (tRNA-Asp, -Asn, -His and -Tyr). Catalysis occurs through a double-displacement mechanism. The nucleophile active site attacks the C1' of nucleotide 34 to detach the guanine base from the RNA, forming a covalent enzyme-RNA intermediate. The proton acceptor active site deprotonates the incoming PreQ1, allowing a nucleophilic attack on the C1' of the ribose to form the product. After dissociation, two additional enzymatic reactions on the tRNA convert PreQ1 to queuine (Q), resulting in the hypermodified nucleoside queuosine (7-(((4,5-cis-dihydroxy-2-cyclopenten-1-yl)amino)methyl)-7-deazaguanosine). The protein is Queuine tRNA-ribosyltransferase of Tolumonas auensis (strain DSM 9187 / NBRC 110442 / TA 4).